The chain runs to 68 residues: UPF0253 protein VF_0662 (68 aa).

This sequence belongs to the UPF0253 family.

This Aliivibrio fischeri (strain ATCC 700601 / ES114) (Vibrio fischeri) protein is UPF0253 protein VF_0662.